A 326-amino-acid polypeptide reads, in one-letter code: MIKKIAILTSGGDSPGMNNAIRAIIKTARLYDIETYLVYEGFLGLYNGWIKPSEGIDEDSYINKGGTFIFSARFVEFAQEKYRQVAKENLLKLGIEALVVIGGDGSYKGAQKLHEMGIKTIALPGTIDNDITSSDFTIGYDTALNTIVEAVDKIRDTASSHKRCIMVEVMGHGASDLALYSGMATGSEIIVSNDYKLSVEEMAKIVKKQFEKPNKRSVIITVSEFVFKDLQQVAKQIEELTNITTKAVVLAHIQRGGYPSARERINATILGKHAVLRLKQGQSGIALGLIKNQVAATPILEALAMPQTRKDLLERRTKSYNDINQA.

Gly12 provides a ligand contact to ATP. 22–26 serves as a coordination point for ADP; sequence RAIIK. Residues 73 to 74 and 103 to 106 each bind ATP; these read RF and GDGS. Residue Asp104 participates in Mg(2+) binding. Substrate is bound at residue 126–128; the sequence is TID. Residue Asp128 is the Proton acceptor of the active site. Residue Arg155 coordinates ADP. Residues Arg163 and 170 to 172 contribute to the substrate site; that span reads MGH. ADP-binding positions include 186 to 188, Lys212, and 215 to 217; these read GSE and KRS. Substrate contacts are provided by residues Glu224, Lys246, and 252 to 255; that span reads HIQR.

The protein belongs to the phosphofructokinase type A (PFKA) family. ATP-dependent PFK group I subfamily. Prokaryotic clade 'B1' sub-subfamily. In terms of assembly, homotetramer. It depends on Mg(2+) as a cofactor.

The protein localises to the cytoplasm. It carries out the reaction beta-D-fructose 6-phosphate + ATP = beta-D-fructose 1,6-bisphosphate + ADP + H(+). Its pathway is carbohydrate degradation; glycolysis; D-glyceraldehyde 3-phosphate and glycerone phosphate from D-glucose: step 3/4. With respect to regulation, allosterically activated by ADP and other diphosphonucleosides, and allosterically inhibited by phosphoenolpyruvate. In terms of biological role, catalyzes the phosphorylation of D-fructose 6-phosphate to fructose 1,6-bisphosphate by ATP, the first committing step of glycolysis. The protein is ATP-dependent 6-phosphofructokinase of Mycoplasmopsis pulmonis (strain UAB CTIP) (Mycoplasma pulmonis).